The primary structure comprises 153 residues: Hsp90 co-chaperone HCH1 (153 aa).

It belongs to the AHA1 family. In terms of assembly, monomer. Interacts with HSP82.

It localises to the cytoplasm. It is found in the nucleus. Functionally, co-chaperone that binds to the molecular chaperone HSP82 and stimulates its ATPase activity. Although not essential, it confers thermotolerance when intracellular levels of HSP82 are limiting. The chain is Hsp90 co-chaperone HCH1 (HCH1) from Saccharomyces cerevisiae (strain ATCC 204508 / S288c) (Baker's yeast).